The chain runs to 397 residues: DnaJ homolog subfamily A member 4 (397 aa).

The J domain maps to 4-70; that stretch reads ETQYYDILGV…RDIYDQGGEQ (67 aa). Residue Ser18 is modified to Phosphoserine. Residues 122 to 206 form a CR-type zinc finger; that stretch reads GITKKLALQK…CSGAKVTREK (85 aa). Zn(2+) is bound by residues Cys135, Cys138, Cys151, Cys154, Cys178, Cys181, Cys194, and Cys197. CXXCXGXG motif repeat units lie at residues 135–142, 151–158, 178–185, and 194–201; these read CEKCEGIG, CPLCKGRG, CIECKGQG, and CENCSGAK. A compositionally biased stretch (basic and acidic residues) spans 366–380; it reads EFNPNEQSWRQHREA. The tract at residues 366 to 397 is disordered; that stretch reads EFNPNEQSWRQHREAYEEDDEEPRAGVQCQTA. At Cys394 the chain carries Cysteine methyl ester. The S-farnesyl cysteine moiety is linked to residue Cys394. Residues 395-397 constitute a propeptide, removed in mature form; it reads QTA.

In terms of tissue distribution, specifically expressed in testis and heart.

Its subcellular location is the membrane. The sequence is that of DnaJ homolog subfamily A member 4 (Dnaja4) from Mus musculus (Mouse).